We begin with the raw amino-acid sequence, 374 residues long: Protein A6 homolog (374 aa).

It belongs to the chordopoxvirinae A6 family.

It localises to the virion. Functionally, plays an essential role in immature virion (IV) to mature virion (MV) transition. The protein is Protein A6 homolog of Vertebrata (FPV).